The sequence spans 492 residues: N-succinylglutamate 5-semialdehyde dehydrogenase (492 aa).

Gly220 to Gly225 lines the NAD(+) pocket. Catalysis depends on residues Glu243 and Cys277.

Belongs to the aldehyde dehydrogenase family. AstD subfamily.

The catalysed reaction is N-succinyl-L-glutamate 5-semialdehyde + NAD(+) + H2O = N-succinyl-L-glutamate + NADH + 2 H(+). It participates in amino-acid degradation; L-arginine degradation via AST pathway; L-glutamate and succinate from L-arginine: step 4/5. Catalyzes the NAD-dependent reduction of succinylglutamate semialdehyde into succinylglutamate. The chain is N-succinylglutamate 5-semialdehyde dehydrogenase from Escherichia fergusonii (strain ATCC 35469 / DSM 13698 / CCUG 18766 / IAM 14443 / JCM 21226 / LMG 7866 / NBRC 102419 / NCTC 12128 / CDC 0568-73).